Here is a 332-residue protein sequence, read N- to C-terminus: Putative D-threonate 4-phosphate dehydrogenase (332 aa).

Positions 138 and 139 each coordinate substrate. Residues histidine 168, histidine 211, and histidine 266 each contribute to the a divalent metal cation site. Substrate is bound by residues lysine 274 and arginine 292.

Belongs to the PdxA family. PdxA2 subfamily. In terms of assembly, homodimer. It depends on a divalent metal cation as a cofactor.

It catalyses the reaction 4-O-phospho-D-threonate + NAD(+) = dihydroxyacetone phosphate + CO2 + NADH. Its function is as follows. Catalyzes the NAD-dependent oxidation and subsequent decarboxylation of D-threonate 4-phosphate to produce dihydroxyacetone phosphate (DHAP). In Fusobacterium nucleatum subsp. nucleatum (strain ATCC 25586 / DSM 15643 / BCRC 10681 / CIP 101130 / JCM 8532 / KCTC 2640 / LMG 13131 / VPI 4355), this protein is Putative D-threonate 4-phosphate dehydrogenase.